We begin with the raw amino-acid sequence, 513 residues long: Cytochrome P450 monooxygenase CYP3 (513 aa).

A disordered region spans residues 1–21 (MLPRSLGHSTSELSPPFDGPN). C451 is a binding site for heme.

It belongs to the cytochrome P450 family. It depends on heme as a cofactor.

It participates in secondary metabolite biosynthesis. In terms of biological role, cytochrome P450 monooxygenase; part of the gene cluster that mediates the biosynthesis of a tyrosine-derived cytochalasan acting as a fungal signal recognized by resistant rice plants and leads to avirulence in Pi33 resistant rice cultivars. The first step in the pathway is catalyzed by the hybrid PKS-NRPS ACE1, assisted by the enoyl reductase RAP1, that are responsible for fusion of the tyrosine precursor and the polyketide backbone. The polyketide synthase module (PKS) of ACE1 is responsible for the synthesis of the polyketide backbone and the downstream nonribosomal peptide synthetase (NRPS) amidates the carboxyl end of the polyketide with the tyrosine precursor. Because ACE1 lacks a designated enoylreductase (ER) domain, the required activity is provided the enoyl reductase RAP1. Reduction by the hydrolyase ORFZ, followed by dehydration and intra-molecular Diels-Alder cyclization by the Diels-Alderase ORF3 then yield the required isoindolone-fused macrocycle. A number of oxidative steps catalyzed by the tailoring enzymes identified within the cluster, including cytochrome P450 monooxygenases CYP1 to CYP4, the FAD-linked oxidoreductase OXR2 and the short-chain dehydrogenase/reductase OXR1, are further required to afford the final cytochalasans that confer avirulence and which have still to be identified. The monooxygenase CYP1 has been shown to be a site-selective C-18 hydroxylase whereas the function of CYP3 is the site-selective epoxidation of the C-6/C-7 olefin that is present in some intermediate compounds. Finally, SYN2 and RAP2 are not required for avirulence in Pi33 resistant rice cultivars. This Pyricularia oryzae (strain 70-15 / ATCC MYA-4617 / FGSC 8958) (Rice blast fungus) protein is Cytochrome P450 monooxygenase CYP3.